Consider the following 139-residue polypeptide: MNTNDAIKVLKENGLKYTDKRKDMLDIFVKEDKYLNAKHIQQQMDKDYPGISFDTVYRNLHLFKDLGIIESTELDGEMKFRIACTNHHHHHFICENCGETKVIDFCPIEKIKSQLPNVNIHTHKLEVYGICEECQRKAN.

Residues 1–85 (MNTNDAIKVL…GEMKFRIACT (85 aa)) form a DNA-binding region. Positions 86 to 139 (NHHHHHFICENCGETKVIDFCPIEKIKSQLPNVNIHTHKLEVYGICEECQRKAN) are dimerization. Fe cation is bound by residues H88 and H90. Positions 94 and 97 each coordinate Zn(2+). E109 and H123 together coordinate Fe cation.

It belongs to the Fur family. As to quaternary structure, homodimer.

Its subcellular location is the cytoplasm. Functionally, acts as a global negative controlling element, employing Fe(2+) as a cofactor to bind the operator of the repressed genes. The polypeptide is Ferric uptake regulation protein (fur) (Staphylococcus epidermidis (strain ATCC 35984 / DSM 28319 / BCRC 17069 / CCUG 31568 / BM 3577 / RP62A)).